An 864-amino-acid chain; its full sequence is MHERYVPADVEAAAQSDWRAADAYRSKEDANRKKFYCVSMLPYPSGKLHMGHVRNYTINDVMYRYLRMNGYNTLMPMGWDAFGMPAENAAMANGVPPAQWTYENIAYMKKQMQAMGLAIDWSREVTTCKPDYYKWNQWLFLKMLEKGIAYKKTGTVNWDPVDQTVLANEQVIDGRGWRSGAFVEKREIPMYYMRITQYADELLNDLDGLGWPERVKVMQHNWIGKSFGVNFGFPYELDGEKKLLRVFTTRADTIMGVTFCAIAAEHPLAARLARDKPALQAFIDECKRGGVAEADIATMEKKGVATGFSVSHPLTGEPVEVWIGNYVLMSYGEGAVMGVPAHDERDFAFAKKYGLPIRQVIAVEGETYSTDAWQEWYGDKTRAVCVNSGKYDGLAYDAAVDAIAAELKAGGLGDKQITYRLRDWGISRQRYWGTPIPIIHCPSCGDVPVPEQDLPVVLPEDLVPDGTGNPLAKSDAFLNCTCPKCGAVAKRETDTMDTFVDSAWYFSRYAAPDAQTMVDARTDYWMPMDQYIGGIEHAILHLLYSRFWAKVMRDLGLVAFGEPAKNLLTQGMVLNETFYREDAAGKKTWYNPADVTVSFDDKGRPVGAVLKSDGQPVELGGIEKMSKSKNNGVDPQMLIDHYGADTARLFTMFAAPPEQQLEWSGAGVDGASRFLRRVWAFGFANREALAVRAPFDAAQLAEAGKTLRREIHGVLKQADFDYQRLQYNTVVSAAMKMLNAIEGAKGATPAVLRETYGVLLRVLYPVVPHVTFELWKVLGYADEFGPLLDAPWPKVDEAALEQAEIELVLQVNGKVRGALKVAKDASREAIEAAAVADGMFAKFAEGRPAKKIIVVPGRLVNVVV.

A 'HIGH' region motif is present at residues 42 to 52 (PYPSGKLHMGH). A 'KMSKS' region motif is present at residues 624–628 (KMSKS). Lysine 627 provides a ligand contact to ATP.

Belongs to the class-I aminoacyl-tRNA synthetase family.

It is found in the cytoplasm. It carries out the reaction tRNA(Leu) + L-leucine + ATP = L-leucyl-tRNA(Leu) + AMP + diphosphate. This chain is Leucine--tRNA ligase, found in Burkholderia mallei (strain NCTC 10229).